The following is a 492-amino-acid chain: Ferruginol synthase (492 aa).

Residues 1–21 (MDPFPLVAAALFIAATWFITF) form a helical membrane-spanning segment. Cys-436 provides a ligand contact to heme.

It belongs to the cytochrome P450 family. Heme is required as a cofactor. Expressed in leaf glandular trichomes.

It is found in the membrane. The catalysed reaction is abieta-8,11,13-triene + reduced [NADPH--hemoprotein reductase] + O2 = ferruginol + oxidized [NADPH--hemoprotein reductase] + H2O + H(+). It catalyses the reaction ferruginol + reduced [NADPH--hemoprotein reductase] + O2 = 11-hydroxyferruginol + oxidized [NADPH--hemoprotein reductase] + H2O + H(+). The enzyme catalyses miltiradiene + 2 reduced [NADPH--hemoprotein reductase] + 2 O2 = 11-oxomiltiradiene + 2 oxidized [NADPH--hemoprotein reductase] + 3 H2O + 2 H(+). It participates in secondary metabolite biosynthesis; terpenoid biosynthesis. Its function is as follows. Monooxygenase involved in the biosynthesis of labdane-related diterpenes natural products. Catalyzes the oxidation of abietatriene to produce ferruginol. Catalyzes the oxidation of ferruginol at C-12 to produce 11-hydroxyferruginol. Ferruginol and 11-hydroxyferruginol are intermediates in the biosynthesis of carnosate, a potent antioxidant. May also convert miltiradiene into 11-oxomiltiradiene. This is Ferruginol synthase from Salvia fruticosa (Greek sage).